A 186-amino-acid polypeptide reads, in one-letter code: Cytochrome b6-f complex iron-sulfur subunit (186 aa).

The chain crosses the membrane as a helical span at residues 16–38 (LLSFVTGGAIAATTAATLYPVVL). One can recognise a Rieske domain in the interval 74–163 (GEPVLTLGLD…ATVSDDKVLI (90 aa)). Cysteine 109, histidine 111, cysteine 127, and histidine 130 together coordinate [2Fe-2S] cluster. Cysteine 114 and cysteine 129 are disulfide-bonded.

This sequence belongs to the Rieske iron-sulfur protein family. As to quaternary structure, the 4 large subunits of the cytochrome b6-f complex are cytochrome b6, subunit IV (17 kDa polypeptide, PetD), cytochrome f and the Rieske protein, while the 4 small subunits are PetG, PetL, PetM and PetN. The complex functions as a dimer. [2Fe-2S] cluster serves as cofactor.

The protein resides in the cell inner membrane. It carries out the reaction 2 oxidized [plastocyanin] + a plastoquinol + 2 H(+)(in) = 2 reduced [plastocyanin] + a plastoquinone + 4 H(+)(out). In terms of biological role, component of the cytochrome b6-f complex, which mediates electron transfer between photosystem II (PSII) and photosystem I (PSI), cyclic electron flow around PSI, and state transitions. This is Cytochrome b6-f complex iron-sulfur subunit from Gloeobacter violaceus (strain ATCC 29082 / PCC 7421).